A 480-amino-acid polypeptide reads, in one-letter code: 3-isopropylmalate dehydratase large subunit (480 aa).

Cys-361, Cys-421, and Cys-424 together coordinate [4Fe-4S] cluster.

It belongs to the aconitase/IPM isomerase family. LeuC type 1 subfamily. As to quaternary structure, heterodimer of LeuC and LeuD. [4Fe-4S] cluster is required as a cofactor.

The catalysed reaction is (2R,3S)-3-isopropylmalate = (2S)-2-isopropylmalate. It functions in the pathway amino-acid biosynthesis; L-leucine biosynthesis; L-leucine from 3-methyl-2-oxobutanoate: step 2/4. Its function is as follows. Catalyzes the isomerization between 2-isopropylmalate and 3-isopropylmalate, via the formation of 2-isopropylmaleate. The protein is 3-isopropylmalate dehydratase large subunit of Corynebacterium diphtheriae (strain ATCC 700971 / NCTC 13129 / Biotype gravis).